A 322-amino-acid chain; its full sequence is Cytochrome c biogenesis protein CcsA (322 aa).

The next 8 helical transmembrane spans lie at 6–26 (LQLI…FLFF), 45–65 (LIAN…AGYF), 69–89 (NLYE…LFLY), 97–117 (LLDN…HFIL), 144–164 (MISY…LYFL), 230–250 (LITF…VWAN), 265–285 (WALI…IKGW), and 291–311 (AMVA…VNLL).

The protein belongs to the CcmF/CycK/Ccl1/NrfE/CcsA family. In terms of assembly, may interact with Ccs1.

The protein resides in the plastid. It localises to the cyanelle thylakoid membrane. Required during biogenesis of c-type cytochromes (cytochrome c6 and cytochrome f) at the step of heme attachment. The polypeptide is Cytochrome c biogenesis protein CcsA (Cyanophora paradoxa).